The primary structure comprises 66 residues: Large ribosomal subunit protein bL35 (66 aa).

It belongs to the bacterial ribosomal protein bL35 family.

The sequence is that of Large ribosomal subunit protein bL35 from Rhodopseudomonas palustris (strain BisB18).